Here is a 79-residue protein sequence, read N- to C-terminus: Acyl carrier protein (79 aa).

Positions 2 to 77 (SDIADKVKKI…DAIDYIEKQK (76 aa)) constitute a Carrier domain. Ser37 carries the post-translational modification O-(pantetheine 4'-phosphoryl)serine.

It belongs to the acyl carrier protein (ACP) family. Post-translationally, 4'-phosphopantetheine is transferred from CoA to a specific serine of apo-ACP by AcpS. This modification is essential for activity because fatty acids are bound in thioester linkage to the sulfhydryl of the prosthetic group.

Its subcellular location is the cytoplasm. It participates in lipid metabolism; fatty acid biosynthesis. In terms of biological role, carrier of the growing fatty acid chain in fatty acid biosynthesis. This Gluconobacter oxydans (strain 621H) (Gluconobacter suboxydans) protein is Acyl carrier protein.